Here is a 157-residue protein sequence, read N- to C-terminus: Protein Smg homolog (157 aa).

Belongs to the Smg family.

The sequence is that of Protein Smg homolog from Xanthomonas campestris pv. campestris (strain 8004).